The chain runs to 240 residues: Probable 2-phosphosulfolactate phosphatase (240 aa).

This sequence belongs to the ComB family. Mg(2+) is required as a cofactor.

It catalyses the reaction (2R)-O-phospho-3-sulfolactate + H2O = (2R)-3-sulfolactate + phosphate. This is Probable 2-phosphosulfolactate phosphatase from Clostridium kluyveri (strain NBRC 12016).